The following is a 135-amino-acid chain: Galectin-1 (135 aa).

Ala2 carries the N-acetylalanine modification. A Galectin domain is found at 4–135; the sequence is GLVASNLNLK…DFKIKCVAFD (132 aa). N6-acetyllysine occurs at positions 13 and 29. The residue at position 30 (Ser30) is a Phosphoserine. A beta-D-galactoside is bound by residues 45-49, His53, Asn62, and 69-72; these read HFNPR and WGAE. Lys108 is modified (N6-acetyllysine; alternate). Residue Lys108 is modified to N6-succinyllysine; alternate. Lys128 carries the N6-acetyllysine modification.

In terms of assembly, homodimer. Binds LGALS3BP. Interacts with CD2, CD3, CD4, CD6, CD7, CD43, ALCAM and CD45. Interacts with laminin (via poly-N-acetyllactosamine). Interacts with SUSD2. Interacts with cargo receptor TMED10; the interaction mediates the translocation from the cytoplasm into the ERGIC (endoplasmic reticulum-Golgi intermediate compartment) and thereby secretion. Post-translationally, the N-terminus is blocked.

It is found in the secreted. It localises to the extracellular space. The protein resides in the extracellular matrix. The protein localises to the cytoplasm. Its function is as follows. Lectin that binds beta-galactoside and a wide array of complex carbohydrates. Plays a role in regulating apoptosis, cell proliferation and cell differentiation. Inhibits CD45 protein phosphatase activity and therefore the dephosphorylation of Lyn kinase. Strong inducer of T-cell apoptosis. This Bubalus bubalis (Domestic water buffalo) protein is Galectin-1.